Reading from the N-terminus, the 223-residue chain is ATP-dependent Clp protease proteolytic subunit 2 (223 aa).

Positions 1–40 (MHAGSGNDMDITRMTPTRLDDEPDAPEPETREDDNKTLNS) are disordered. The segment covering 21–32 (DEPDAPEPETRE) has biased composition (acidic residues). Residue Ser124 is the Nucleophile of the active site. His149 is an active-site residue.

It belongs to the peptidase S14 family. Fourteen ClpP subunits assemble into 2 heptameric rings which stack back to back to give a disk-like structure with a central cavity, resembling the structure of eukaryotic proteasomes.

It is found in the cytoplasm. It carries out the reaction Hydrolysis of proteins to small peptides in the presence of ATP and magnesium. alpha-casein is the usual test substrate. In the absence of ATP, only oligopeptides shorter than five residues are hydrolyzed (such as succinyl-Leu-Tyr-|-NHMec, and Leu-Tyr-Leu-|-Tyr-Trp, in which cleavage of the -Tyr-|-Leu- and -Tyr-|-Trp bonds also occurs).. Functionally, cleaves peptides in various proteins in a process that requires ATP hydrolysis. Has a chymotrypsin-like activity. Plays a major role in the degradation of misfolded proteins. This Gluconobacter oxydans (strain 621H) (Gluconobacter suboxydans) protein is ATP-dependent Clp protease proteolytic subunit 2.